The sequence spans 218 residues: Protein-methionine-sulfoxide reductase heme-binding subunit MsrQ (218 aa).

Helical transmembrane passes span 14–34 (AVHA…WQVW), 60–80 (LLLI…AVLI), 86–106 (LGLY…WLDL), 121–141 (PYIT…ITST), and 155–175 (LHML…WLVK).

Belongs to the MsrQ family. As to quaternary structure, heterodimer of a catalytic subunit (MsrP) and a heme-binding subunit (MsrQ). FMN serves as cofactor. The cofactor is heme b.

It is found in the cell inner membrane. Part of the MsrPQ system that repairs oxidized periplasmic proteins containing methionine sulfoxide residues (Met-O), using respiratory chain electrons. Thus protects these proteins from oxidative-stress damage caused by reactive species of oxygen and chlorine generated by the host defense mechanisms. MsrPQ is essential for the maintenance of envelope integrity under bleach stress, rescuing a wide series of structurally unrelated periplasmic proteins from methionine oxidation. MsrQ provides electrons for reduction to the reductase catalytic subunit MsrP, using the quinone pool of the respiratory chain. The protein is Protein-methionine-sulfoxide reductase heme-binding subunit MsrQ of Xanthomonas campestris pv. campestris (strain B100).